Reading from the N-terminus, the 272-residue chain is Shikimate dehydrogenase (NADP(+)) (272 aa).

Shikimate is bound by residues 14–16 (SKS) and Thr-61. Lys-65 (proton acceptor) is an active-site residue. Glu-77 serves as a coordination point for NADP(+). 2 residues coordinate shikimate: Asn-86 and Asp-102. NADP(+) is bound by residues 126-130 (GAGGA), 149-154 (NRTVSR), and Met-213. Tyr-215 lines the shikimate pocket. Residue Gly-237 coordinates NADP(+).

Belongs to the shikimate dehydrogenase family. In terms of assembly, homodimer.

It catalyses the reaction shikimate + NADP(+) = 3-dehydroshikimate + NADPH + H(+). It participates in metabolic intermediate biosynthesis; chorismate biosynthesis; chorismate from D-erythrose 4-phosphate and phosphoenolpyruvate: step 4/7. In terms of biological role, involved in the biosynthesis of the chorismate, which leads to the biosynthesis of aromatic amino acids. Catalyzes the reversible NADPH linked reduction of 3-dehydroshikimate (DHSA) to yield shikimate (SA). This chain is Shikimate dehydrogenase (NADP(+)), found in Shigella dysenteriae serotype 1 (strain Sd197).